The primary structure comprises 304 residues: Phosphonates import ATP-binding protein PhnC 1 (304 aa).

Positions V4 to S240 constitute an ABC transporter domain. G37–S44 is an ATP binding site. Residues S240 to L304 are disordered. Over residues T263–T272 the composition is skewed to polar residues. Acidic residues predominate over residues T289–L304.

This sequence belongs to the ABC transporter superfamily. Phosphonates importer (TC 3.A.1.9.1) family. As to quaternary structure, the complex is composed of two ATP-binding proteins (PhnC), two transmembrane proteins (PhnE) and a solute-binding protein (PhnD).

It localises to the cell membrane. It carries out the reaction phosphonate(out) + ATP + H2O = phosphonate(in) + ADP + phosphate + H(+). Its function is as follows. Part of the ABC transporter complex PhnCDE involved in phosphonates import. Responsible for energy coupling to the transport system. In Haloquadratum walsbyi (strain DSM 16790 / HBSQ001), this protein is Phosphonates import ATP-binding protein PhnC 1.